The following is a 186-amino-acid chain: Threonylcarbamoyl-AMP synthase (186 aa).

A YrdC-like domain is found at 2 to 186 (PNEFELAVAA…ARTGAIIRPS (185 aa)).

The protein belongs to the SUA5 family. TsaC subfamily.

Its subcellular location is the cytoplasm. It catalyses the reaction L-threonine + hydrogencarbonate + ATP = L-threonylcarbamoyladenylate + diphosphate + H2O. Required for the formation of a threonylcarbamoyl group on adenosine at position 37 (t(6)A37) in tRNAs that read codons beginning with adenine. Catalyzes the conversion of L-threonine, HCO(3)(-)/CO(2) and ATP to give threonylcarbamoyl-AMP (TC-AMP) as the acyladenylate intermediate, with the release of diphosphate. This Aeromonas hydrophila subsp. hydrophila (strain ATCC 7966 / DSM 30187 / BCRC 13018 / CCUG 14551 / JCM 1027 / KCTC 2358 / NCIMB 9240 / NCTC 8049) protein is Threonylcarbamoyl-AMP synthase.